The primary structure comprises 143 residues: Large ribosomal subunit protein uL13 (143 aa).

This sequence belongs to the universal ribosomal protein uL13 family. As to quaternary structure, part of the 50S ribosomal subunit.

In terms of biological role, this protein is one of the early assembly proteins of the 50S ribosomal subunit, although it is not seen to bind rRNA by itself. It is important during the early stages of 50S assembly. The chain is Large ribosomal subunit protein uL13 from Prochlorococcus marinus subsp. pastoris (strain CCMP1986 / NIES-2087 / MED4).